Consider the following 1951-residue polypeptide: Sodium channel protein type 3 subunit alpha (1951 aa).

At 1–128 (MAQALLVPPG…KIAIKILVHS (128 aa)) the chain is on the cytoplasmic side. Positions 28 to 60 (RAAEEKAKKPKKEQDIDDENKPKPNSDLEAGKN) are disordered. Over residues 46-57 (ENKPKPNSDLEA) the composition is skewed to basic and acidic residues. The stretch at 110–455 (ILTPLNPVRK…QQMLEQLKKQ (346 aa)) is one I repeat. Residues 129-146 (LFSMLIMCTILTNCVFMT) traverse the membrane as a helical segment. The Extracellular portion of the chain corresponds to 147-152 (LSNPPD). Residues 153-174 (WTKNVEYTFTGIYTFESLIKIL) traverse the membrane as a helical segment. Over 175–188 (ARGFCLEDFTFLRD) the chain is Cytoplasmic. The helical transmembrane segment at 189 to 206 (PWNWLDFSVIVMAYVTEF) threads the bilayer. Residues 207–213 (VDLGNVS) lie on the Extracellular side of the membrane. N211 is a glycosylation site (N-linked (GlcNAc...) asparagine). A helical transmembrane segment spans residues 214–235 (ALRTFRVLRALKTISVIPGLKT). The Cytoplasmic segment spans residues 236 to 249 (IVGALIQSVKKLSD). The helical transmembrane segment at 250-269 (VMILTVFCLSVFALIGLQLF) threads the bilayer. Topologically, residues 270–369 (MGNLRNKCSQ…NYGYTSFDTF (100 aa)) are extracellular. Residues N290, N296, N302, N307, and N339 are each glycosylated (N-linked (GlcNAc...) asparagine). Positions 370–386 (SWAFLSLFRLMTQDYWE) form an intramembrane region, pore-forming. The Extracellular segment spans residues 387-397 (NLYQLTLRAAG). Residues 398–424 (KTYMIFFVLVIFLGSFYLVNLILAVVA) traverse the membrane as a helical segment. The Cytoplasmic segment spans residues 425 to 712 (MAYEEQNQAT…LVNLIVMDPF (288 aa)). Phosphoserine occurs at positions 484, 485, and 486. Disordered stretches follow at residues 493–529 (SKSA…SESE) and 587–633 (VGSE…TEVR). Positions 500–509 (RNRRKKRRQR) are enriched in basic residues. Basic and acidic residues-rich tracts occupy residues 510 to 529 (EHLE…SESE) and 596 to 622 (DEHS…ERRN). An II repeat occupies 693–965 (CCDAWLKVKH…QIAVGRMQKG (273 aa)). Residues 713–730 (VDLAITICIVLNTLFMAM) traverse the membrane as a helical segment. Topologically, residues 731–738 (EHYPMTQQ) are extracellular. The chain crosses the membrane as a helical span at residues 739–763 (FSSVLTVGNLVFTGIFTAEMVLKII). Residues 764–773 (AMDPYYYFQE) are Cytoplasmic-facing. The helical transmembrane segment at 774–793 (GWNIFDGIIVSLSLMELGLA) threads the bilayer. The Extracellular segment spans residues 794–797 (NVEG). The chain crosses the membrane as a helical span at residues 798 to 816 (LSVLRSFRLLRVFKLAKSW). Over 817-834 (PTLNMLIKIIGNSVGALG) the chain is Cytoplasmic. A helical membrane pass occupies residues 835 to 855 (NLTLVLAIIVFIFAVVGMQLF). The Extracellular segment spans residues 856–880 (GKSYKECVCKINVDCKLPRWHMNDF). A disulfide bond links C864 and C870. An intramembrane region (pore-forming) is located at residues 881-896 (FHSFLIVFRVLCGEWI). The Extracellular segment spans residues 897–907 (ETMWDCMEVAG). C902 and C911 are oxidised to a cystine. Residues 908–934 (QTMCLIVFMLVMVIGNLVVLNLFLALL) traverse the membrane as a helical segment. The Cytoplasmic segment spans residues 935–1156 (LSSFSSDNLA…RKTCYSIVEH (222 aa)). The interval 1068-1112 (TEEFSSESELEESKEKLNATSSSEGSTVDVAPPREGEQAEIEPEE) is disordered. One copy of the III repeat lies at 1139-1450 (KGKIWWNLRK…KKYYNAMKKL (312 aa)). A helical transmembrane segment spans residues 1157–1177 (NWFETFIVFMILLSSGALAFE). The Extracellular segment spans residues 1178 to 1189 (DIYIEQRKTIKT). Residues 1190–1211 (MLEYADKVFTYIFILEMLLKWV) traverse the membrane as a helical segment. The Cytoplasmic segment spans residues 1212 to 1217 (AYGFQT). A helical membrane pass occupies residues 1218 to 1243 (YFTNAWCWLDFLIVDVSLVSLVANAL). Over 1244–1252 (GYSELGAIK) the chain is Extracellular. A helical transmembrane segment spans residues 1253 to 1271 (SLRTLRALRPLRALSRFEG). At 1272–1284 (MRVVVNALVGAIP) the chain is on the cytoplasmic side. A helical membrane pass occupies residues 1285–1307 (SIMNVLLVCLIFWLIFSIMGVNL). Residues 1308-1353 (FAGKFYHCVNTTTGNMFEIKEVNNFSDCQALGKQARWKNVKVNFDN) are Extracellular-facing. A disulfide bond links C1315 and C1335. 2 N-linked (GlcNAc...) asparagine glycosylation sites follow: N1317 and N1331. The pore-forming intramembrane region spans 1354–1370 (VGAGYLALLQVATFKGW). Residues 1371-1393 (MDIMYAAVDSRDVKLQPIYEENL) are Extracellular-facing. The chain crosses the membrane as a helical span at residues 1394 to 1419 (YMYLYFVIFIIFGSFFTLNLFIGVII). Topologically, residues 1420–1477 (DNFNQQKKKFGGQDIFMTEEQKKYYNAMKKLGSKKPQKPIPRPANKFQGMVFDFVTRQ) are cytoplasmic. A Phosphoserine; by PKC modification is found at S1452. One copy of the IV repeat lies at 1459 to 1757 (IPRPANKFQG…WEKFDPDATQ (299 aa)). The chain crosses the membrane as a helical span at residues 1478-1496 (VFDISIMILICLNMVTMMV). Over 1497 to 1504 (ETDDQSKY) the chain is Extracellular. A helical membrane pass occupies residues 1505–1528 (MTLVLSRINLVFIVLFTGEFLLKL). Topologically, residues 1529–1538 (ISLRYYYFTI) are cytoplasmic. A helical membrane pass occupies residues 1539-1556 (GWNIFDFVVVILSIVGMF). The Extracellular segment spans residues 1557-1568 (LAELIEKYFVSP). The helical transmembrane segment at 1569-1591 (TLFRVIRLARIGRILRLIKGAKG) threads the bilayer. The Cytoplasmic portion of the chain corresponds to 1592–1604 (IRTLLFALMMSLP). The helical transmembrane segment at 1605-1628 (ALFNIGLLLFLVMFIYAIFGMSNF) threads the bilayer. Residues 1629-1650 (AYVKKEAGIDDMFNFETFGNSM) are Extracellular-facing. Positions 1651–1663 (ICLFQITTSAGWD) form an intramembrane region, pore-forming. At 1664–1695 (GLLAPILNSAPPDCDPDAIHPGSSVKGDCGNP) the chain is on the extracellular side. Residues 1696–1721 (SVGIFFFVSYIIISFLVVVNMYIAVI) traverse the membrane as a helical segment. Residues 1722–1951 (LENFSVATEE…KGKEVRENQK (230 aa)) are Cytoplasmic-facing. One can recognise an IQ domain in the interval 1851–1880 (EEVSAAIIQRNYRCYLLKQRLKNISSKYDK). The disordered stretch occupies residues 1898–1951 (DKLNGNSTPEKTDGSSSTTSPPSYDSVTKPDKEKFEKDKPEKEIKGKEVRENQK). The segment covering 1925–1951 (TKPDKEKFEKDKPEKEIKGKEVRENQK) has biased composition (basic and acidic residues).

The protein belongs to the sodium channel (TC 1.A.1.10) family. Nav1.3/SCN3A subfamily. As to quaternary structure, heterooligomer of an alpha subunit, SCN3A, and 1 to 3 regulatory beta subunits including SCN1B and SCN2B; disulfide-linked with some beta subunits like SCN2B. Interacts with NEDD4L; could regulate expression of SCN3A at the plasma membrane through ubiquitination-regulated endocytosis. Interacts with the conotoxin GVIIJ. Interacts with the spider beta/delta-theraphotoxin-Pre1a. Interacts with the spider RTX-VII toxin (AC P0DL75). May be ubiquitinated by NEDD4L; which would promote its endocytosis. Post-translationally, phosphorylation at Ser-1452 by PKC in a highly conserved cytoplasmic loop slows inactivation of the sodium channel and reduces peak sodium currents.

It is found in the cell membrane. The protein resides in the basal cell membrane. The enzyme catalyses Na(+)(in) = Na(+)(out). Pore-forming subunit of Nav1.3, a voltage-gated sodium (Nav) channel that directly mediates the depolarizing phase of action potentials in excitable membranes. Navs, also called VGSCs (voltage-gated sodium channels) or VDSCs (voltage-dependent sodium channels), operate by switching between closed and open conformations depending on the voltage difference across the membrane. In the open conformation they allow Na(+) ions to selectively pass through the pore, along their electrochemical gradient. The influx of Na+ ions provokes membrane depolarization, initiating the propagation of electrical signals throughout cells and tissues. In some secretory cell types, it also participates in cell excitability through membrane depolarization and regulates cells responsiveness to stimuli triggering secretion. For instance, it controls the release of serotonin/5-hydroxytryptamine by enterochromaffin cells and is required for both glucagon- and glucose-induced insulin secretion in pancreatic endocrine cells. The protein is Sodium channel protein type 3 subunit alpha of Rattus norvegicus (Rat).